The following is a 283-amino-acid chain: Acetylglutamate kinase (283 aa).

Residues 64-65 (GG), arginine 86, and asparagine 178 contribute to the substrate site.

Belongs to the acetylglutamate kinase family. ArgB subfamily.

The protein resides in the cytoplasm. The catalysed reaction is N-acetyl-L-glutamate + ATP = N-acetyl-L-glutamyl 5-phosphate + ADP. Its pathway is amino-acid biosynthesis; L-arginine biosynthesis; N(2)-acetyl-L-ornithine from L-glutamate: step 2/4. Functionally, catalyzes the ATP-dependent phosphorylation of N-acetyl-L-glutamate. The polypeptide is Acetylglutamate kinase (Lactococcus lactis subsp. lactis (strain IL1403) (Streptococcus lactis)).